We begin with the raw amino-acid sequence, 312 residues long: Malate dehydrogenase (312 aa).

NAD(+) contacts are provided by residues 12–17 and aspartate 36; that span reads GAGFTG. Residues arginine 87 and arginine 93 each contribute to the substrate site. Residues asparagine 100 and 123–125 contribute to the NAD(+) site; that span reads LTN. Asparagine 125 provides a ligand contact to substrate. Residue serine 149 is modified to Phosphoserine. Arginine 156 provides a ligand contact to substrate. Catalysis depends on histidine 180, which acts as the Proton acceptor.

It belongs to the LDH/MDH superfamily. MDH type 3 family.

It carries out the reaction (S)-malate + NAD(+) = oxaloacetate + NADH + H(+). Its function is as follows. Catalyzes the reversible oxidation of malate to oxaloacetate. In Geobacillus kaustophilus (strain HTA426), this protein is Malate dehydrogenase.